The sequence spans 199 residues: Carbon disulfide hydrolase (199 aa).

Zn(2+) is bound by residues Cys36, His91, and Cys94.

It belongs to the beta-class carbonic anhydrase family. As to quaternary structure, exists as both octamers and hexadecamers in solution. The hexadecameric homooligomer may form a catenane, through interactions of two interlocked octameric rings. Requires Zn(2+) as cofactor.

It carries out the reaction carbon disulfide + 2 H2O = 2 hydrogen sulfide + CO2 + 2 H(+). It functions in the pathway sulfur metabolism; hydrogen sulfide biosynthesis. Catalyzes the conversion of carbon disulfide into hydrogen sulfide and carbon dioxide, with carbonyl sulfide as an intermediate. Likely plays a key role in sulfur metabolism that allows A.thiooxidans G8 to grow on carbon disulfide as the main carbon and energy source. Does not show carbonic anhydrase activity (hydration of CO(2) to carbonate). This chain is Carbon disulfide hydrolase, found in Acidithiobacillus thiooxidans (Thiobacillus thiooxidans).